Here is a 371-residue protein sequence, read N- to C-terminus: ETS-related transcription factor Elf-3 (371 aa).

The PNT domain maps to 46-132 (NPQMSLEGTE…AQLRDLTSSS (87 aa)). The short motif at 137–145 (SWIIELLEK) is the 9aaTAD element. Positions 173–251 (GQQASPYHPG…HGKRKRGRPR (79 aa)) are disordered. Residues 181–216 (PGSCGAGAPSPGSSDVSTAGTGASRSSHSSDSGGSD) show a composition bias toward low complexity. Over residues 231-241 (GFRDCKKGDPK) the composition is skewed to basic and acidic residues. Basic residues predominate over residues 242–251 (HGKRKRGRPR). Positions 273–355 (THLWEFIRDI…DGRRLVYKFG (83 aa)) form a DNA-binding region, ETS.

This sequence belongs to the ETS family. In terms of assembly, interacts with TBP. Interacts with CREBBP and EP300; these act as transcriptional coactivators of ELF3 and positively modulate its function. Interacts with XRCC5/KU86 and XRCC6/KU70; these inhibit the ability of ELF3 to bind DNA and negatively modulate its transcriptional activity. Associated with CLND7 and POU2F3. Interacts with ZNF768. As to expression, expressed exclusively in tissues containing a high content of terminally differentiated epithelial cells including mammary gland, colon, trachea, kidney, prostate, uterus, stomach and skin.

The protein localises to the cytoplasm. The protein resides in the nucleus. Its function is as follows. Transcriptional activator that binds and transactivates ETS sequences containing the consensus nucleotide core sequence GGA[AT]. Acts synergistically with POU2F3 to transactivate the SPRR2A promoter and with RUNX1 to transactivate the ANGPT1 promoter. Also transactivates collagenase, CCL20, CLND7, FLG, KRT8, NOS2, PTGS2, SPRR2B, TGFBR2 and TGM3 promoters. Represses KRT4 promoter activity. Involved in mediating vascular inflammation. May play an important role in epithelial cell differentiation and tumorigenesis. May be a critical downstream effector of the ERBB2 signaling pathway. May be associated with mammary gland development and involution. Plays an important role in the regulation of transcription with TATA-less promoters in preimplantation embryos, which is essential in preimplantation development. This Homo sapiens (Human) protein is ETS-related transcription factor Elf-3.